The following is a 305-amino-acid chain: MESRKREDHLRKGSEVSPYESLLAGSISGAVARAVTAPLDTIKIRLQLQRSAFRSRVSVTTVVKDLLKNEGAIALWKGNVPAEILYVLYGAAQFTTYSSISRWLSHLSDTSGFNLPSSAHSLVSGTGAGVVSTLVTYPFDLLRTRLAANSEKKLLSMSGTAREIISSEGFTGLFAGIKPAMLSISTTTGLMFWSYELVRETLGDRDIPFKEGICGFIAGATSKGITFPLDTIRKRTQMYKILYNSAKRVGAFRLLADIVANEGVLGLYKGFGISVLKTSPTSAVSLFVYEYSLAAIQRINRKTLD.

A run of 6 helical transmembrane segments spans residues 16–32 (VSPY…GAVA), 84–100 (ILYV…YSSI), 122–142 (LVSG…FDLL), 169–193 (GFTG…LMFW), 213–229 (ICGF…TFPL), and 270–287 (GFGI…VSLF). Solcar repeat units lie at residues 16–103 (VSPY…ISRW), 116–201 (PSSA…VRET), and 206–295 (DIPF…SLAA).

Belongs to the mitochondrial carrier (TC 2.A.29) family.

Its subcellular location is the mitochondrion inner membrane. Its function is as follows. Mitochondrial transporter that mediates uptake of thiamine pyrophosphate (ThPP) into mitochondria. This chain is Mitochondrial thiamine pyrophosphate carrier 1 (TPC1), found in Scheffersomyces stipitis (strain ATCC 58785 / CBS 6054 / NBRC 10063 / NRRL Y-11545) (Yeast).